Here is a 451-residue protein sequence, read N- to C-terminus: tRNA-2-methylthio-N(6)-dimethylallyladenosine synthase (451 aa).

Positions 5 to 121 (RQYHITTFGC…LQDLLEQVEG (117 aa)) constitute an MTTase N-terminal domain. Cys-14, Cys-50, Cys-84, Cys-156, Cys-160, and Cys-163 together coordinate [4Fe-4S] cluster. The region spanning 142–379 (RDSTVTAWVN…NHLVAQKAAE (238 aa)) is the Radical SAM core domain. The region spanning 382 to 446 (QRYAGRIEEV…AFSLTGEAVE (65 aa)) is the TRAM domain.

Belongs to the methylthiotransferase family. MiaB subfamily. In terms of assembly, monomer. Requires [4Fe-4S] cluster as cofactor.

Its subcellular location is the cytoplasm. The enzyme catalyses N(6)-dimethylallyladenosine(37) in tRNA + (sulfur carrier)-SH + AH2 + 2 S-adenosyl-L-methionine = 2-methylsulfanyl-N(6)-dimethylallyladenosine(37) in tRNA + (sulfur carrier)-H + 5'-deoxyadenosine + L-methionine + A + S-adenosyl-L-homocysteine + 2 H(+). Its function is as follows. Catalyzes the methylthiolation of N6-(dimethylallyl)adenosine (i(6)A), leading to the formation of 2-methylthio-N6-(dimethylallyl)adenosine (ms(2)i(6)A) at position 37 in tRNAs that read codons beginning with uridine. This chain is tRNA-2-methylthio-N(6)-dimethylallyladenosine synthase, found in Picosynechococcus sp. (strain ATCC 27264 / PCC 7002 / PR-6) (Agmenellum quadruplicatum).